A 444-amino-acid chain; its full sequence is NADH-quinone oxidoreductase subunit F (444 aa).

Position 61–70 (61–70 (GRGGAGFSTG)) interacts with NAD(+). Position 176 to 223 (176 to 223 (GAGRYICGEETALINSLEGRRANPRSKPPFPAVFGLWGKPTCVNNVET)) interacts with FMN. Positions 353, 356, 359, and 400 each coordinate [4Fe-4S] cluster.

Belongs to the complex I 51 kDa subunit family. In terms of assembly, composed of 13 different subunits. Subunits NuoCD, E, F, and G constitute the peripheral sector of the complex. FMN serves as cofactor. The cofactor is [4Fe-4S] cluster.

The enzyme catalyses a quinone + NADH + 5 H(+)(in) = a quinol + NAD(+) + 4 H(+)(out). Functionally, NDH-1 shuttles electrons from NADH, via FMN and iron-sulfur (Fe-S) centers, to quinones in the respiratory chain. Couples the redox reaction to proton translocation (for every two electrons transferred, four hydrogen ions are translocated across the cytoplasmic membrane), and thus conserves the redox energy in a proton gradient. This Buchnera aphidicola subsp. Acyrthosiphon pisum (strain APS) (Acyrthosiphon pisum symbiotic bacterium) protein is NADH-quinone oxidoreductase subunit F (nuoF).